The following is a 515-amino-acid chain: MTLNNGGKANERGSNENPLQALSKNEAFLVPEFLDTAQSKEKAIASKVSNTLHMSTEESEFPQQVSSTPMFSENTVHPRHEVSPKPSSKNTQLKQENISKSSGYSKQTNYSNTPKSLAKTTHPKQGSTLKPATNSTHYREDDIPKSSEDIIQPKKGDRPKSSEDIIQSKKEDRPKSSEDIIQSKKEDRPKSSEDIIQSKKEDRPKSSEDIIQSKKEDRPKSSEDIIQPKKEDRPKSSEDSVPSKKGDRPKSSEDSVQPKKEDRPKSSEDSVQSKEGEVHKPLKDSIQSKETKVPKSPQDSIQSKEDKTHRPLKDSVQSKESEEPKSSHESIQSKEDKIHKPLKDSIPSKEGDIPKSPEDTIQSQEEITASEEDTIQSQEGNTIKSSEEDVQLSESKLLGLGAEIETLEEGLVRVIKDKEEFEEVLKDAGEKLVAVDFSAAWCGPCRMMKPLFHSLSLKHEDVIFLEVDTEDCEQLVQDCEIFHLPTFQFYKNEEKVGEFSGALVGKLERSISELK.

Positions 1–23 (MTLNNGGKANERGSNENPLQALS) are disordered. Residues Ser14 and Ser39 each carry the phosphoserine modification. Positions 51–390 (TLHMSTEESE…NTIKSSEEDV (340 aa)) are disordered. 2 stretches are compositionally biased toward polar residues: residues 61-75 (FPQQ…SENT) and 85-136 (KPSS…TNST). Tandem repeats lie at residues 92–106 (QLKQ…GYSK), 107–121 (QTNY…AKTT), 122–136 (HPKQ…TNST), 137–151 (HYRE…EDII), 152–166 (QPKK…EDII), 167–181 (QSKK…EDII), 182–196 (QSKK…EDII), 197–211 (QSKK…EDII), 212–226 (QSKK…EDII), 227–241 (QPKK…EDSV), 242–256 (PSKK…EDSV), 257–271 (QPKK…EDSV), 272–286 (QSKE…KDSI), 287–301 (QSKE…QDSI), 302–316 (QSKE…KDSV), 317–331 (QSKE…HESI), 332–346 (QSKE…KDSI), 347–362 (PSKE…DTIQ), 363–375 (SQEE…EDTI), 376–390 (QSQE…EEDV), and 391–405 (QLSE…AEIE). The 21 X 15 AA approximate tandem repeat of Q-P-K-X-G-D-I-P-K-S-[PS]-E-[KE]-X-I stretch occupies residues 92 to 405 (QLKQENISKS…KLLGLGAEIE (314 aa)). Basic and acidic residues-rich tracts occupy residues 137–293 (HYRE…ETKV) and 302–358 (QSKE…KSPE). At Ser146 the chain carries Phosphoserine. Residues 375 to 384 (IQSQEGNTIK) show a composition bias toward polar residues. Positions 398 to 515 (LGLGAEIETL…KLERSISELK (118 aa)) constitute a Thioredoxin domain. Cysteines 442 and 445 form a disulfide.

In terms of tissue distribution, testis-specific. Strongly expressed in the testicular seminiferous tubules, mostly in the round spermatids.

It is found in the cytoplasm. Its function is as follows. Probably plays a regulatory role in sperm development. May participate in regulation of fibrous sheath (FS) assembly by supporting the formation of disulfide bonds during sperm tail morphogenesis. May also be required to rectify incorrect disulfide pairing and generate suitable pairs between the FS constituents. Can reduce disulfide bonds in vitro in the presence of NADP and thioredoxin reductase. The chain is Thioredoxin domain-containing protein 2 (Txndc2) from Mus musculus (Mouse).